A 295-amino-acid polypeptide reads, in one-letter code: MTTETGTWTVKKGLAEMLKGGVIMDVTTPEQAKIAEEAGACAVMALERVPADIRAAGGVARMADPTVILRIMDAVTIPVMAKARIGHFVEAQVLESLGIDYIDESEVLTPADDLFHINKNDFKVPFVCGARNLGEALRRIGEGAAMIRTKGEPGTGNVVEAVRHARQVMSEIRKLTTLPKEERMSFAKEIGAPYELVCLVAETGRLPVVNFAAGGIATPADAALMMQLGVDGVFVGSGIFKSGDPIRRAKAIVAATTHYNDPKVIAEVSKDLGEPMVGIEIPTIPAEQRMQERGW.

Position 25 (Asp25) interacts with D-ribose 5-phosphate. Lys82 acts as the Schiff-base intermediate with D-ribose 5-phosphate in catalysis. Residue Gly154 participates in D-ribose 5-phosphate binding. Arg166 is a D-glyceraldehyde 3-phosphate binding site. D-ribose 5-phosphate contacts are provided by residues Gly215 and 236 to 237 (GS).

It belongs to the PdxS/SNZ family. In the presence of PdxT, forms a dodecamer of heterodimers.

The catalysed reaction is aldehydo-D-ribose 5-phosphate + D-glyceraldehyde 3-phosphate + L-glutamine = pyridoxal 5'-phosphate + L-glutamate + phosphate + 3 H2O + H(+). It participates in cofactor biosynthesis; pyridoxal 5'-phosphate biosynthesis. Catalyzes the formation of pyridoxal 5'-phosphate from ribose 5-phosphate (RBP), glyceraldehyde 3-phosphate (G3P) and ammonia. The ammonia is provided by the PdxT subunit. Can also use ribulose 5-phosphate and dihydroxyacetone phosphate as substrates, resulting from enzyme-catalyzed isomerization of RBP and G3P, respectively. This is Pyridoxal 5'-phosphate synthase subunit PdxS from Heliobacterium modesticaldum (strain ATCC 51547 / Ice1).